A 154-amino-acid chain; its full sequence is Protein AE7-like 1 (154 aa).

This sequence belongs to the MIP18 family.

May play a role in chromosome segregation through establishment of sister chromatid cohesion. Unable to complement ae7 mutants, and thus probably not involved in the cytosolic iron-sulfur assembly (CIA) pathway. The polypeptide is Protein AE7-like 1 (Arabidopsis thaliana (Mouse-ear cress)).